Here is a 386-residue protein sequence, read N- to C-terminus: MNIHEYQAKELLRDYGVPVPRGQVIYDVRDAQRAAWHIESDIAVVKAQIHAGGRGKAGGVKIAKSITEVEQFSRELLGKTLVTHQTGQEGRVVKAILIEEGCEIYKEYYIAFTLDRENSKIALIASEEGGMDIEEVAANRPDKILKEIIDPLIGLTDFQGRRVCFNLNIDGSLINDTVELMKNLYRCFIEKDCSLLEINPLVITKNNRVMALDAKINFDGNGLYRNEDVLKLRDLNEEDEKEIEASKYNLSYISLDGNIGCMVNGAGLAMATMDIIKLYGGNPANFLDVGGGASEEKVMNAFKIILSDPKVKGIFVNIFGGIMKCDVIAKGIVNAANEVKLNVPLVVRLEGTNVELGKEILNQSNLNIVTATTMADGAKKIVKLIK.

The region spanning 9–244 is the ATP-grasp domain; sequence KELLRDYGVP…LNEEDEKEIE (236 aa). Residues Lys46, 53-55, Glu99, Cys102, and Glu107 each bind ATP; that span reads GRG. 2 residues coordinate Mg(2+): Asn199 and Asp213. Substrate is bound by residues Asn264 and 321–323; that span reads GIM.

It belongs to the succinate/malate CoA ligase beta subunit family. Heterotetramer of two alpha and two beta subunits. It depends on Mg(2+) as a cofactor.

The catalysed reaction is succinate + ATP + CoA = succinyl-CoA + ADP + phosphate. It catalyses the reaction GTP + succinate + CoA = succinyl-CoA + GDP + phosphate. It participates in carbohydrate metabolism; tricarboxylic acid cycle; succinate from succinyl-CoA (ligase route): step 1/1. In terms of biological role, succinyl-CoA synthetase functions in the citric acid cycle (TCA), coupling the hydrolysis of succinyl-CoA to the synthesis of either ATP or GTP and thus represents the only step of substrate-level phosphorylation in the TCA. The beta subunit provides nucleotide specificity of the enzyme and binds the substrate succinate, while the binding sites for coenzyme A and phosphate are found in the alpha subunit. In Alkaliphilus oremlandii (strain OhILAs) (Clostridium oremlandii (strain OhILAs)), this protein is Succinate--CoA ligase [ADP-forming] subunit beta.